The sequence spans 192 residues: uncharacterized protein (192 aa).

In terms of domain architecture, Nudix hydrolase spans 29-160 (QRQAAVLVPI…PLDIHRRGND (132 aa)). The Nudix box signature appears at 67–89 (GAVDNTDATLIAAALREAQEEVA). Glutamate 83 and glutamate 87 together coordinate Mg(2+).

The protein belongs to the Nudix hydrolase family. PCD1 subfamily. Mn(2+) is required as a cofactor. It depends on Mg(2+) as a cofactor.

Probably mediates the hydrolysis of some nucleoside diphosphate derivatives. This is an uncharacterized protein from Klebsiella pneumoniae subsp. pneumoniae (strain ATCC 700721 / MGH 78578).